We begin with the raw amino-acid sequence, 426 residues long: MKKISQVLNWLSSLKIAILLLLLIAISCAAGTLIPQQESNQFYYDNFNKNPFLGIINANILLLFEFDHVYTSFWFLFLLIWLGLALSVCSFRRQLPILKSALNWIDYKSPRQIAKLSVAQTIVTNNCSESLEKIKLNLKKQGWNVKETDGRIAARQGVIGRLGPILIHLGMILLMIGATYGSLNGKTIEKFLAPGRSIDLLNNNEEKGLTIELQKFQIERDPQGRAEQYKSIVNVIEPNGSNESKEISVNYPLRYKGLTLYQADWSLAAITIQIDNSPKLQIPIEPISELGEQVWGTVIPTNKDGKNQILLTVDSELGPVNIYDNDGTLLTKLSINKEEKVKGALINIINIIPSSGLLLKHDPGVPLVYLSFAIILIGGSLSIISTKKIWVLHENEKSMIYIGGLSNRNLSGLSKELPNLISFLEN.

The next 3 membrane-spanning stretches (helical) occupy residues 14–34 (LKIA…GTLI), 72–92 (SFWF…CSFR), and 162–182 (LGPI…TYGS).

This sequence belongs to the Ccs1/CcsB family. As to quaternary structure, may interact with CcsA.

It is found in the cellular thylakoid membrane. Required during biogenesis of c-type cytochromes (cytochrome c6 and cytochrome f) at the step of heme attachment. This is Cytochrome c biogenesis protein CcsB from Prochlorococcus marinus (strain NATL1A).